A 219-amino-acid chain; its full sequence is GPI-anchored hemophore PGA7 (219 aa).

Positions 1–13 (MHFIFYLILLVSA) are cleaved as a signal peptide. Residues 17–126 (GNFGTYPKVP…SMLSTAAGDA (110 aa)) enclose the CFEM domain. Disulfide bonds link C45–C85, C49–C80, C59–C66, and C68–C101. D63 provides a ligand contact to heme. The tract at residues 151 to 194 (VVSETGSASETGSSESAQSTTTGSSSTGSSSTDSSSSSSSSPSS) is disordered. Over residues 153–194 (SETGSASETGSSESAQSTTTGSSSTGSSSTDSSSSSSSSPSS) the composition is skewed to low complexity. Residue S194 is the site of GPI-anchor amidated serine attachment. The propeptide at 195–219 (SANFAVLQTGGIGSVILGFMMYLLV) is removed in mature form.

Belongs to the RBT5 family. Interacts with RBT5. In terms of processing, the GPI-anchor is attached to the protein in the endoplasmic reticulum and serves to target the protein to the cell surface. There, the glucosamine-inositol phospholipid moiety is cleaved off and the GPI-modified mannoprotein is covalently attached via its lipidless GPI glycan remnant to the 1,6-beta-glucan of the outer cell wall layer.

The protein localises to the secreted. It is found in the cell wall. It localises to the cell membrane. In terms of biological role, GPI-linked hyphal surface heme-binding protein involved in heme-iron utilization. Heme transfer occurs between PGA7, RBT5 and CSA2 supporting a model in which the 3 CFEM proteins cooperate in a heme-acquisition system and form a cross-cell wall heme-transfer cascade. The ability to acquire iron from host tissues is a major virulence factor of pathogenic microorganisms. Required for biofilm formation. The sequence is that of GPI-anchored hemophore PGA7 from Candida albicans (strain SC5314 / ATCC MYA-2876) (Yeast).